We begin with the raw amino-acid sequence, 514 residues long: F-box-like/WD repeat-containing protein TBL1XR1 (514 aa).

An N-acetylserine modification is found at Ser-2. The LisH domain maps to Ser-4–Gln-36. Residues Gly-41–Ala-86 form the F-box-like domain. N6-acetyllysine is present on Lys-102. Positions Ala-114–His-139 are disordered. Residues Ala-124–Glu-135 show a composition bias toward low complexity. 8 WD repeats span residues Gly-167–Pro-206, Pro-223–Leu-262, Gln-264–Gln-303, Phe-306–Thr-344, Gly-347–Asp-386, Ala-389–Thr-437, Lys-440–Ser-479, and Arg-481–Arg-513. Lys-277 participates in a covalent cross-link: Glycyl lysine isopeptide (Lys-Gly) (interchain with G-Cter in SUMO2).

The protein belongs to the WD repeat EBI family. In terms of assembly, component of the N-Cor repressor complex, at least composed of NCOR1, NCOR2, HDAC3, TBL1X, TBL1XR1, CORO2A and GPS2. Probable component of some E3 ubiquitin ligase complex. Interacts with histones H2B and H4. Interacts with MECP2; bridges interaction between MECP2 and NCOR1. Interacts with USP44.

It is found in the nucleus. Its function is as follows. F-box-like protein involved in the recruitment of the ubiquitin/19S proteasome complex to nuclear receptor-regulated transcription units. Plays an essential role in transcription activation mediated by nuclear receptors. Probably acts as integral component of the N-Cor corepressor complex that mediates the recruitment of the 19S proteasome complex, leading to the subsequent proteasomal degradation of N-Cor complex, thereby allowing cofactor exchange, and transcription activation. The chain is F-box-like/WD repeat-containing protein TBL1XR1 (Tbl1xr1) from Mus musculus (Mouse).